Reading from the N-terminus, the 144-residue chain is GYVNGLESAEETLAENRESGDFGSSAAAMGNVTHNGCGHYLHTLFWENMDPNGGGEPEGELLDRIEEDFGSYEGWKGEFEAAASAAGGWALLVYDPVAKQLRNVPVDKHDQGALWGSHPILALDVWEHSYYYDYGPARGDFIDA.

Residues 1–22 (GYVNGLESAEETLAENRESGDF) form a disordered region. 3 residues coordinate Mn(2+): His-42, Asp-124, and His-128.

This sequence belongs to the iron/manganese superoxide dismutase family. It depends on Mn(2+) as a cofactor.

The catalysed reaction is 2 superoxide + 2 H(+) = H2O2 + O2. In terms of biological role, destroys superoxide anion radicals which are normally produced within the cells and which are toxic to biological systems. The sequence is that of Superoxide dismutase [Mn] (sod) from Haloarcula hispanica.